Consider the following 67-residue polypeptide: MPQLDTSTWFTTIVAMILSLFILMQLKFHKYTYPMNPVLKALESTSFPCPWETKWTKIYSPLSLPQH.

A helical membrane pass occupies residues 8 to 24 (TWFTTIVAMILSLFILM). K54 carries the post-translational modification N6-acetyllysine; alternate. N6-succinyllysine; alternate is present on K54. An N6-acetyllysine modification is found at K57.

This sequence belongs to the ATPase protein 8 family. In terms of assembly, component of the ATP synthase complex composed at least of ATP5F1A/subunit alpha, ATP5F1B/subunit beta, ATP5MC1/subunit c (homooctomer), MT-ATP6/subunit a, MT-ATP8/subunit 8, ATP5ME/subunit e, ATP5MF/subunit f, ATP5MG/subunit g, ATP5MK/subunit k, ATP5MJ/subunit j, ATP5F1C/subunit gamma, ATP5F1D/subunit delta, ATP5F1E/subunit epsilon, ATP5PF/subunit F6, ATP5PB/subunit b, ATP5PD/subunit d, ATP5PO/subunit OSCP. ATP synthase complex consists of a soluble F(1) head domain (subunits alpha(3) and beta(3)) - the catalytic core - and a membrane F(0) domain - the membrane proton channel (subunits c, a, 8, e, f, g, k and j). These two domains are linked by a central stalk (subunits gamma, delta, and epsilon) rotating inside the F1 region and a stationary peripheral stalk (subunits F6, b, d, and OSCP). Interacts with PRICKLE3.

Its subcellular location is the mitochondrion membrane. Subunit 8, of the mitochondrial membrane ATP synthase complex (F(1)F(0) ATP synthase or Complex V) that produces ATP from ADP in the presence of a proton gradient across the membrane which is generated by electron transport complexes of the respiratory chain. ATP synthase complex consist of a soluble F(1) head domain - the catalytic core - and a membrane F(1) domain - the membrane proton channel. These two domains are linked by a central stalk rotating inside the F(1) region and a stationary peripheral stalk. During catalysis, ATP synthesis in the catalytic domain of F(1) is coupled via a rotary mechanism of the central stalk subunits to proton translocation. In vivo, can only synthesize ATP although its ATP hydrolase activity can be activated artificially in vitro. Part of the complex F(0) domain. In Oryctolagus cuniculus (Rabbit), this protein is ATP synthase F(0) complex subunit 8.